The following is an 86-amino-acid chain: Co-chaperonin GroES (86 aa).

Belongs to the GroES chaperonin family. Heptamer of 7 subunits arranged in a ring. Interacts with the chaperonin GroEL.

The protein localises to the cytoplasm. Its function is as follows. Together with the chaperonin GroEL, plays an essential role in assisting protein folding. The GroEL-GroES system forms a nano-cage that allows encapsulation of the non-native substrate proteins and provides a physical environment optimized to promote and accelerate protein folding. GroES binds to the apical surface of the GroEL ring, thereby capping the opening of the GroEL channel. This is Co-chaperonin GroES from Campylobacter curvus (strain 525.92).